The following is a 774-amino-acid chain: Dapper homolog 2 (774 aa).

Positions 67–93 form a coiled coil; sequence PEQQLEAALAALQEQLSRLRQQDIGLK. Disordered regions lie at residues 188-225, 295-319, 345-500, and 624-710; these read RPQA…LDRA, TPQR…TIQT, TPAK…EKIK, and CPES…GAQS. Over residues 438–452 the composition is skewed to polar residues; the sequence is VQASPSSKAQQTPSA. A compositionally biased stretch (low complexity) spans 637–648; it reads RRAGGPLARGRP. Basic and acidic residues-rich tracts occupy residues 655–672 and 686–700; these read AYTR…ECDP and SSDH…RESS. Residues 771–774 carry the PDZ-binding motif; that stretch reads MTMV.

This sequence belongs to the dapper family. As to quaternary structure, can form homodimers and heterodimers with DACT1 or DACT3. Interacts with CSNK1D, PKA catalytic subunit, PKC-type kinase, CSNK2B, DVL1, DVL2, DVL3, VANGL1, VANGL2, TGFBR1, CTNNB1, CTNND2, CTNND1, LEF1, TCF7, TCF7L1 and HDAC1.

In terms of biological role, involved in regulation of intracellular signaling pathways during development. Negatively regulates the Nodal signaling pathway, possibly by promoting the lysosomal degradation of Nodal receptors, such as TGFBR1. May be involved in control of the morphogenetic behavior of kidney ureteric bud cells by keeping cells epithelial and restraining their mesenchymal character. May play an inhibitory role in the re-epithelialization of skin wounds by attenuating TGF-beta signaling. This is Dapper homolog 2 (DACT2) from Homo sapiens (Human).